Consider the following 466-residue polypeptide: MAKTLYEKLFDAHVVYEAENETPLLYIDRHLVHEVTSPQAFDGLRAHGRPVRQPGKTFATMDHNVSTQTKDINACGEMARIQMQELIKNCKEFGVELYDLNHPYQGIVHVMGPEQGVTLPGMTIVCGDSHTATHGAFGALAFGIGTSEVEHVLATQTLKQGRAKTMKIEVQGKAAPGITAKDIVLAIIGKTGSAGGTGHVVEFCGEAIRDLSMEGRMTLCNMAIEMGAKAGLVAPDETTFNYVKGRLHAPKGKDFDDAVAYWKTLQTDEGATFDTVVTLQAEEISPQVTWGTNPGQVISVNDNIPDPASFADPVERASAEKALAYMGLKPGIPLIEVAIDKVFIGSCTNSRIEDLRAAAEIAKGRKVAPGVQALVVPGSGPVKAQAEAEGLDKIFIEAGFEWRLPGCSMCLAMNNDRLNPGERCASTSNRNFEGRQGRGGRTHLVSPAMAAAAAVTGHFADIRNIK.

Cys347, Cys407, and Cys410 together coordinate [4Fe-4S] cluster.

It belongs to the aconitase/IPM isomerase family. LeuC type 1 subfamily. In terms of assembly, heterodimer of LeuC and LeuD. [4Fe-4S] cluster serves as cofactor.

The enzyme catalyses (2R,3S)-3-isopropylmalate = (2S)-2-isopropylmalate. It functions in the pathway amino-acid biosynthesis; L-leucine biosynthesis; L-leucine from 3-methyl-2-oxobutanoate: step 2/4. In terms of biological role, catalyzes the isomerization between 2-isopropylmalate and 3-isopropylmalate, via the formation of 2-isopropylmaleate. The sequence is that of 3-isopropylmalate dehydratase large subunit from Shigella flexneri serotype 5b (strain 8401).